Consider the following 597-residue polypeptide: Leishmanolysin (597 aa).

The signal sequence occupies residues 1 to 39 (MSVDSSSTHRHRCVAARLVPLAAAGAAVTVAVGTAAAWA). The propeptide at 40-99 (HAGAVQHRCIHDAMQARVRQSVAAQRMAPSAVSAVGLPHVTLDAGNTAAGADPSTGTANV) is activation peptide. 2 disulfide bridges follow: cysteine 124/cysteine 141 and cysteine 190/cysteine 229. Histidine 263 contributes to the Zn(2+) binding site. The active site involves glutamate 264. Histidine 267 contacts Zn(2+). Asparagine 299 carries N-linked (GlcNAc...) asparagine glycosylation. 7 disulfides stabilise this stretch: cysteine 313–cysteine 383, cysteine 390–cysteine 452, cysteine 403–cysteine 422, cysteine 412–cysteine 486, cysteine 463–cysteine 507, cysteine 512–cysteine 562, and cysteine 532–cysteine 555. Histidine 332 contributes to the Zn(2+) binding site. Residue asparagine 404 is glycosylated (N-linked (GlcNAc...) asparagine). Asparagine 574 carries the GPI-anchor amidated asparagine lipid modification. The propeptide at 575–597 (AAGRRGPRAATALVVAALLAVAL) is removed in mature form.

Belongs to the peptidase M8 family. Zn(2+) is required as a cofactor.

The protein resides in the cell membrane. It carries out the reaction Preference for hydrophobic residues at P1 and P1' and basic residues at P2' and P3'. A model nonapeptide is cleaved at -Ala-Tyr-|-Leu-Lys-Lys-.. Functionally, has an integral role during the infection of macrophages in the mammalian host. This Leishmania amazonensis protein is Leishmanolysin (gp63).